Consider the following 402-residue polypeptide: uncharacterized protein (402 aa).

12 consecutive transmembrane segments (helical) span residues 23–43 (IVSV…PLAV), 52–72 (LGYG…ATLL), 90–110 (VLYG…SVAI), 121–141 (LLVG…AAIG), 158–178 (WNGI…VLLV), 180–200 (WLGL…GFAL), 228–248 (GMGL…ITLY), 255–275 (ANAV…RLLF), 282–302 (LGGF…LLLL), 309–329 (WVGL…FPAF), 351–371 (LFVD…ANLF), and 375–395 (SMFL…VALH).

This sequence belongs to the major facilitator superfamily. YhhS family.

The protein resides in the cell inner membrane. This is an uncharacterized protein from Pseudomonas aeruginosa (strain ATCC 15692 / DSM 22644 / CIP 104116 / JCM 14847 / LMG 12228 / 1C / PRS 101 / PAO1).